The primary structure comprises 584 residues: Arginine--tRNA ligase (584 aa).

A 'HIGH' region motif is present at residues 126–136 (PNIAKEMHVGH).

The protein belongs to the class-I aminoacyl-tRNA synthetase family. Monomer.

Its subcellular location is the cytoplasm. It catalyses the reaction tRNA(Arg) + L-arginine + ATP = L-arginyl-tRNA(Arg) + AMP + diphosphate. This is Arginine--tRNA ligase from Synechococcus sp. (strain ATCC 27144 / PCC 6301 / SAUG 1402/1) (Anacystis nidulans).